Reading from the N-terminus, the 1027-residue chain is MAETNNECSIKVLCRFRPLNQAEILRGDKFIPIFQGDDSVIIGGKPYVFDRVFPPNTTQEQVYHACAMQIVKDVLAGYNGTIFAYGQTSSGKTHTMEGKLHDPQLMGIIPRIARDIFNHIYSMDENLEFHIKVSYFEIYLDKIRDLLDVTKTNLSVHEDKNRVPFVRGCTERFVSSPEEILDVIDEGKSNRHVAVTNMNEHSSRSHSIFLINIKQENIETEQKLSGKLYLADLAGSEKVSKTGAEGAVLDEAKNINKSLSALGNVISALAEGTKSYVPYRDSKMTRILQDSLGGNCRTTMFICCSPSSYNDAETKSTLMFGQRAKTIKNTASVNLELTAEQWKKKYEKEKEKTKAQKETIAKLEAELSRWRNGENVPETERLAGEDSALAAEICEETPVNDNSSIVVRIAPEERQKYEEEIRRLYKQLDDKDDEINQQSQLIEKLKQQMLDQEELLVSTRGDNEKVQRELSHLQSENDAAKEEVKEVLQALEELAVNYDQKSQEVEEKSQQNQLLVDELSQKVATMLSLESEPQRLQEVSGHQRKRIAEVLNGLMKDLSEFSVIVGNGEIKLPVEISGAIEEEFTVARLYISKIKSEVKSVVKRCRQLENLQVECHRKMEVTGRELSSCQLLISQHEAKIRSLTEYMQTVELKKRHLEESYDSLSDELAKLQAQETVHEVALKDKEPDTQDAEEVKKALELQMENHREAHHRQLARLRDEINEKQKTIDELKDLDQKLQLELEKLQADYERLKNEENEKSAKLQELTFLYERHEQSKQDLKGLEETVARELQTLHNLRKLFVQDVTTRVKKSAEMEPEDSGGIHSQKQKISFLENNLEQLTEVHKQLVRDNADLRCELPKLEKRLRATAERVKALEGALKEAKEGAMKDKRRYQQEVDRIKEAVRYKSSGKRGHSAQIAKPVRPGHYPASSPTNPYGTRSPECISYTNNLFQNYQNLHLQAAPSSTSDVYFASNGATSVAPLASYQKANTDNGNATDINDNRSDLPCGYEAEDPAKLFPLHQETAAS.

Alanine 2 carries the N-acetylalanine modification. Residues 9 to 327 form the Kinesin motor domain; that stretch reads SIKVLCRFRP…LMFGQRAKTI (319 aa). ATP is bound at residue 86-93; it reads GQTSSGKT. The tract at residues 174–315 is microtubule-binding; sequence VSSPEEILDV…PSSYNDAETK (142 aa). The tract at residues 271–361 is necessary for interaction with ZFYVE27; it reads EGTKSYVPYR…KTKAQKETIA (91 aa). The stretch at 331–905 forms a coiled coil; it reads ASVNLELTAE…EVDRIKEAVR (575 aa). The tract at residues 353–1027 is interaction with BICD2; that stretch reads TKAQKETIAK…FPLHQETAAS (675 aa). Threonine 397 carries the post-translational modification Phosphothreonine. Positions 906–936 are disordered; sequence YKSSGKRGHSAQIAKPVRPGHYPASSPTNPY. The interval 907 to 1027 is globular; it reads KSSGKRGHSA…FPLHQETAAS (121 aa).

It belongs to the TRAFAC class myosin-kinesin ATPase superfamily. Kinesin family. Kinesin subfamily. Oligomer composed of two heavy chains and two light chains. Interacts with GRIP1. Interacts with FMR1 (via C-terminus); this interaction is increased in a mGluR-dependent manner. Interacts with BORCS5. Interacts with ZFYVE27. Interacts with VAPA, VAPB, SURF4, RAB11A (GDP-bound form), RAB11B (GDP-bound form) and RTN3 in a ZFYVE27-dependent manner. Interacts with BICD2. Interacts with DTNB. In terms of tissue distribution, expressed in brain.

Its subcellular location is the cytoplasm. It is found in the perinuclear region. It localises to the cytoskeleton. The protein localises to the perikaryon. It carries out the reaction ATP + H2O + a kinesin associated with a microtubule at position (n) = ADP + phosphate a kinesin associated with a microtubule at position (n+1, toward the plus end).. Microtubule-dependent motor required for slow axonal transport of neurofilament proteins (NFH, NFM and NFL). Can induce formation of neurite-like membrane protrusions in non-neuronal cells in a ZFYVE27-dependent manner. The ZFYVE27-KIF5A complex contributes to the vesicular transport of VAPA, VAPB, SURF4, RAB11A, RAB11B and RTN3 proteins in neurons. Required for anterograde axonal transportation of MAPK8IP3/JIP3 which is essential for MAPK8IP3/JIP3 function in axon elongation. The sequence is that of Kinesin heavy chain isoform 5A from Rattus norvegicus (Rat).